Reading from the N-terminus, the 932-residue chain is Serotype-specific antigen 1 (932 aa).

An N-terminal signal peptide occupies residues 1-24 (MYKIKHSFNKTLIAISISSFLSIA). Positions 25–407 (YATESIENPQ…WGLINLKKAV (383 aa)) constitute a Peptidase S8 domain. Catalysis depends on charge relay system residues D58, H116, and S351. Residues 669–932 (HTPLQTTVWA…PIWLESKCWL (264 aa)) form the Autotransporter domain.

Belongs to the peptidase S8 family.

It localises to the cell outer membrane. This is Serotype-specific antigen 1 (ssa1) from Mannheimia haemolytica (Pasteurella haemolytica).